Here is a 301-residue protein sequence, read N- to C-terminus: Probable alpha-L-glutamate ligase (301 aa).

An ATP-grasp domain is found at 104–287 (LQLLSRKGIG…VAGIIIEYLE (184 aa)). ATP-binding positions include Lys141, 178–179 (EY), Asp187, and 211–213 (RSN). 3 residues coordinate Mg(2+): Asp248, Glu260, and Asn262. Residues Asp248, Glu260, and Asn262 each coordinate Mn(2+).

The protein belongs to the RimK family. The cofactor is Mg(2+). Mn(2+) serves as cofactor.

This is Probable alpha-L-glutamate ligase from Azotobacter vinelandii (strain DJ / ATCC BAA-1303).